Consider the following 392-residue polypeptide: Branched-chain-amino-acid aminotransferase, mitochondrial (392 aa).

The N-terminal 27 residues, 1–27 (MAAAALGQIWARKLLSVPWLLCGPRRY), are a transit peptide targeting the mitochondrion. Tyr-168 is a binding site for substrate. N6-(pyridoxal phosphate)lysine is present on Lys-229. Lys-321 carries the N6-acetyllysine modification.

It belongs to the class-IV pyridoxal-phosphate-dependent aminotransferase family. As to quaternary structure, homodimer. Pyridoxal 5'-phosphate serves as cofactor. In terms of tissue distribution, ubiquitous.

Its subcellular location is the mitochondrion. The enzyme catalyses L-leucine + 2-oxoglutarate = 4-methyl-2-oxopentanoate + L-glutamate. The catalysed reaction is L-isoleucine + 2-oxoglutarate = (S)-3-methyl-2-oxopentanoate + L-glutamate. It catalyses the reaction L-valine + 2-oxoglutarate = 3-methyl-2-oxobutanoate + L-glutamate. Functionally, catalyzes the first reaction in the catabolism of the essential branched chain amino acids leucine, isoleucine, and valine. May also function as a transporter of branched chain alpha-keto acids. The polypeptide is Branched-chain-amino-acid aminotransferase, mitochondrial (BCAT2) (Homo sapiens (Human)).